We begin with the raw amino-acid sequence, 845 residues long: Protein translocase subunit SecA (845 aa).

Residues Q88, 106–110, and D495 each bind ATP; that span reads GEGKT. The disordered stretch occupies residues 804 to 838; sequence SNRANRPQKKAKRQPIVKPDKPGRNDPCPCGSGKK. The segment covering 809-818 has biased composition (basic residues); sequence RPQKKAKRQP. C831, C833, C842, and C843 together coordinate Zn(2+).

The protein belongs to the SecA family. Monomer and homodimer. Part of the essential Sec protein translocation apparatus which comprises SecA, SecYEG and auxiliary proteins SecDF. Other proteins may also be involved. It depends on Zn(2+) as a cofactor.

It localises to the cell inner membrane. The protein localises to the cytoplasm. It carries out the reaction ATP + H2O + cellular proteinSide 1 = ADP + phosphate + cellular proteinSide 2.. Part of the Sec protein translocase complex. Interacts with the SecYEG preprotein conducting channel. Has a central role in coupling the hydrolysis of ATP to the transfer of proteins into and across the cell membrane, serving as an ATP-driven molecular motor driving the stepwise translocation of polypeptide chains across the membrane. This is Protein translocase subunit SecA from Halothermothrix orenii (strain H 168 / OCM 544 / DSM 9562).